Here is a 41-residue protein sequence, read N- to C-terminus: Large ribosomal subunit protein bL36 (41 aa).

The protein belongs to the bacterial ribosomal protein bL36 family.

This is Large ribosomal subunit protein bL36 from Xylella fastidiosa (strain M23).